Reading from the N-terminus, the 296-residue chain is 4-hydroxybenzoate octaprenyltransferase (296 aa).

Transmembrane regions (helical) follow at residues isoleucine 29–alanine 49, leucine 52–isoleucine 72, alanine 102–alanine 122, tyrosine 146–alanine 166, glycine 169–tyrosine 189, valine 219–phenylalanine 239, leucine 241–tryptophan 261, and phenylalanine 275–valine 295.

This sequence belongs to the UbiA prenyltransferase family. Requires Mg(2+) as cofactor.

It localises to the cell inner membrane. It carries out the reaction all-trans-octaprenyl diphosphate + 4-hydroxybenzoate = 4-hydroxy-3-(all-trans-octaprenyl)benzoate + diphosphate. Its pathway is cofactor biosynthesis; ubiquinone biosynthesis. Functionally, catalyzes the prenylation of para-hydroxybenzoate (PHB) with an all-trans polyprenyl group. Mediates the second step in the final reaction sequence of ubiquinone-8 (UQ-8) biosynthesis, which is the condensation of the polyisoprenoid side chain with PHB, generating the first membrane-bound Q intermediate 3-octaprenyl-4-hydroxybenzoate. This is 4-hydroxybenzoate octaprenyltransferase from Pseudomonas syringae pv. syringae (strain B728a).